Here is a 369-residue protein sequence, read N- to C-terminus: Deacetylase EF_0837 (369 aa).

Zn(2+)-binding residues include His-58, His-60, Lys-152, His-186, His-209, and Asp-270. The residue at position 152 (Lys-152) is an N6-carboxylysine.

This sequence belongs to the metallo-dependent hydrolases superfamily. Atu3266/EF_0837 deacetylase family. The cofactor is Zn(2+).

Esterase that can catalyze the deacetylation of acetyl-(R)-mandelate, but with very low efficiency (in vitro). The chain is Deacetylase EF_0837 from Enterococcus faecalis (strain ATCC 700802 / V583).